The sequence spans 588 residues: Protein POF1B (588 aa).

Coiled-coil stretches lie at residues 332–442 (STFS…VSET) and 502–530 (LHELTSLLEEKDSLIKRQSEELSKLRQEI).

In terms of assembly, interacts with nonmuscle actin.

It localises to the cell junction. The protein localises to the tight junction. Plays a key role in the organization of epithelial monolayers by regulating the actin cytoskeleton. May be involved in ovary development. The chain is Protein POF1B (POF1B) from Pongo abelii (Sumatran orangutan).